Consider the following 229-residue polypeptide: Ribonuclease 3 (229 aa).

The RNase III domain maps to leucine 5 to aspartate 127. Glutamate 40 contributes to the Mg(2+) binding site. Residue aspartate 44 is part of the active site. Aspartate 113 and glutamate 116 together coordinate Mg(2+). The active site involves glutamate 116. In terms of domain architecture, DRBM spans aspartate 154–valine 224.

The protein belongs to the ribonuclease III family. In terms of assembly, homodimer. Requires Mg(2+) as cofactor.

It localises to the cytoplasm. The enzyme catalyses Endonucleolytic cleavage to 5'-phosphomonoester.. Digests double-stranded RNA. Involved in the processing of primary rRNA transcript to yield the immediate precursors to the large and small rRNAs (23S and 16S). Processes some mRNAs, and tRNAs when they are encoded in the rRNA operon. Processes pre-crRNA and tracrRNA of type II CRISPR loci if present in the organism. This is Ribonuclease 3 from Pseudomonas putida (strain W619).